The chain runs to 352 residues: SNF1-related protein kinase regulatory subunit gamma-like PV42a (352 aa).

CBS domains follow at residues 24-106, 122-196, 210-281, and 297-352; these read RNRR…LSDL, LEGL…FDDL, VNDS…ELQT, and KERE…STLS.

The protein belongs to the 5'-AMP-activated protein kinase gamma subunit family. As to expression, expressed highly in rosette leaves, cauline leaves, open flowers, developing siliques and dry seeds, but at a low level in stems and floral buds.

Plays redundant role with PV42b in regulating male gametogenesis and pollen tube guidance. This Arabidopsis thaliana (Mouse-ear cress) protein is SNF1-related protein kinase regulatory subunit gamma-like PV42a (PV42A).